Here is a 133-residue protein sequence, read N- to C-terminus: Small ribosomal subunit protein uS11 (133 aa).

This sequence belongs to the universal ribosomal protein uS11 family. In terms of assembly, part of the 30S ribosomal subunit. Interacts with proteins S7 and S18. Binds to IF-3.

Functionally, located on the platform of the 30S subunit, it bridges several disparate RNA helices of the 16S rRNA. Forms part of the Shine-Dalgarno cleft in the 70S ribosome. The chain is Small ribosomal subunit protein uS11 from Bordetella avium (strain 197N).